The sequence spans 627 residues: Endoglucanase 5 (627 aa).

An N-terminal signal peptide occupies residues 1 to 26 (MRKFGGSLFGVSLLLSVLLAAATAAA). The Nucleophile role is filled by Asp-83. A glycan (N-linked (GlcNAc...) asparagine) is linked at Asn-196. Residue His-416 is part of the active site. N-linked (GlcNAc...) asparagine glycosylation is present at Asn-465. Active-site residues include Asp-468 and Glu-477. Asn-561 is a glycosylation site (N-linked (GlcNAc...) asparagine).

Belongs to the glycosyl hydrolase 9 (cellulase E) family.

The protein resides in the secreted. The catalysed reaction is Endohydrolysis of (1-&gt;4)-beta-D-glucosidic linkages in cellulose, lichenin and cereal beta-D-glucans.. This chain is Endoglucanase 5, found in Arabidopsis thaliana (Mouse-ear cress).